The chain runs to 391 residues: Outer membrane protein 41 (391 aa).

The N-terminal stretch at 1-20 (MKVKYLMLTLVGAIALNASA) is a signal peptide. The residue at position 21 (Gln21) is a Pyrrolidone carboxylic acid. In terms of domain architecture, OmpA-like spans 282–391 (TKTENILTEK…WNRVVIVRSK (110 aa)).

The protein belongs to the outer membrane OOP (TC 1.B.6) superfamily. In terms of assembly, disulfide-linked heterodimer with Omp40.

Its subcellular location is the cell outer membrane. Functionally, may have porin activity and function in peptidoglycan binding. The polypeptide is Outer membrane protein 41 (Porphyromonas gingivalis (strain ATCC BAA-308 / W83)).